The chain runs to 232 residues: Ubiquinone biosynthesis O-methyltransferase (232 aa).

S-adenosyl-L-methionine-binding residues include Arg-36, Gly-55, Asp-76, and Met-120.

The protein belongs to the methyltransferase superfamily. UbiG/COQ3 family.

It carries out the reaction a 3-demethylubiquinol + S-adenosyl-L-methionine = a ubiquinol + S-adenosyl-L-homocysteine + H(+). The catalysed reaction is a 3-(all-trans-polyprenyl)benzene-1,2-diol + S-adenosyl-L-methionine = a 2-methoxy-6-(all-trans-polyprenyl)phenol + S-adenosyl-L-homocysteine + H(+). It functions in the pathway cofactor biosynthesis; ubiquinone biosynthesis. Functionally, O-methyltransferase that catalyzes the 2 O-methylation steps in the ubiquinone biosynthetic pathway. The polypeptide is Ubiquinone biosynthesis O-methyltransferase (Burkholderia ambifaria (strain MC40-6)).